The following is a 215-amino-acid chain: Small ribosomal subunit protein uS7 (215 aa).

Belongs to the universal ribosomal protein uS7 family. As to quaternary structure, part of the 30S ribosomal subunit.

One of the primary rRNA binding proteins, it binds directly to 16S rRNA where it nucleates assembly of the head domain of the 30S subunit. Is located at the subunit interface close to the decoding center. This is Small ribosomal subunit protein uS7 from Pyrococcus abyssi (strain GE5 / Orsay).